The chain runs to 83 residues: RNA-binding protein Hfq (83 aa).

The Sm domain occupies 10–69; that stretch reads DPFLNALRREHVPVSIYLVNGIKLQGQIESFDQYVVLLRNTVTQMVYKHAISTIVPGRAV.

Belongs to the Hfq family. As to quaternary structure, homohexamer.

RNA chaperone that binds small regulatory RNA (sRNAs) and mRNAs to facilitate mRNA translational regulation in response to envelope stress, environmental stress and changes in metabolite concentrations. Also binds with high specificity to tRNAs. In Delftia acidovorans (strain DSM 14801 / SPH-1), this protein is RNA-binding protein Hfq.